We begin with the raw amino-acid sequence, 518 residues long: DNA nucleotidylexotransferase (518 aa).

Residues 11–17 (FGKKRQK) carry the Nuclear localization signal motif. Positions 27 to 124 (IYEIKFHEFV…KPVDTKGKYQ (98 aa)) constitute a BRCT domain. Residues 153-518 (SQYACQRRTT…EYIQPSERNA (366 aa)) are mediates interaction with DNTTIP2. The segment at 260–264 (VGLKT) is involved in DNA binding. Residues 335-340 (GFRRGK) and 344-347 (HDVD) contribute to the a 2'-deoxyribonucleoside 5'-triphosphate site. Positions 345, 347, and 442 each coordinate Mg(2+). Residue 457 to 458 (GW) coordinates a 2'-deoxyribonucleoside 5'-triphosphate.

The protein belongs to the DNA polymerase type-X family. In terms of assembly, interacts with PRP19 and DNTTIP1. Interacts with TRERF1. Forms a ternary complex with DNTTIP2 and core histone. Released from this complex by PCNA. Requires Mg(2+) as cofactor.

The protein localises to the nucleus. It catalyses the reaction DNA(n) + a 2'-deoxyribonucleoside 5'-triphosphate = DNA(n+1) + diphosphate. In terms of biological role, template-independent DNA polymerase which catalyzes the random addition of deoxynucleoside 5'-triphosphate to the 3'-end of a DNA initiator. One of the in vivo functions of this enzyme is the addition of nucleotides at the junction (N region) of rearranged Ig heavy chain and T-cell receptor gene segments during the maturation of B- and T-cells. This is DNA nucleotidylexotransferase (DNTT) from Monodelphis domestica (Gray short-tailed opossum).